A 276-amino-acid chain; its full sequence is MPYVTVGQENSATIDIYYEDLGAGQPIVLIHGFPLNGDSWEKQVLVLLNAGYRVITYDRRGFGASSQPSSGYDYDTFAADLHTLMTKLDLQNTVLVGFSMGTGEVTRYLGKYGSERVQKAVLMAPVPPFLLKTNDNPEGVDQSVFDGIMKAIVDDRPAYFSAFFKEFFNVDVLLGERISNEAIQASWNVAAGASAKGTLDCVPSWLTDFRDDLPRIDVPTLIIHGDADRILPLESTAARLPKRIKNSQLEIIPGGPHAINWTHADQVNPLLLNFLQ.

One can recognise an AB hydrolase-1 domain in the interval proline 26 to histidine 263. Active-site residues include serine 99, aspartate 228, and histidine 257.

The protein belongs to the AB hydrolase superfamily. Bacterial non-heme haloperoxidase / perhydrolase family.

In Synechocystis sp. (strain ATCC 27184 / PCC 6803 / Kazusa), this protein is Putative non-heme chloroperoxidase.